A 174-amino-acid polypeptide reads, in one-letter code: Dual-action ribosomal maturation protein DarP (174 aa).

This sequence belongs to the DarP family.

It is found in the cytoplasm. Its function is as follows. Member of a network of 50S ribosomal subunit biogenesis factors which assembles along the 30S-50S interface, preventing incorrect 23S rRNA structures from forming. Promotes peptidyl transferase center (PTC) maturation. The protein is Dual-action ribosomal maturation protein DarP of Vibrio campbellii (strain ATCC BAA-1116).